The sequence spans 378 residues: Glycerate kinase (378 aa).

This sequence belongs to the glycerate kinase type-1 family.

The enzyme catalyses (R)-glycerate + ATP = (2R)-3-phosphoglycerate + ADP + H(+). This Haemophilus influenzae (strain ATCC 51907 / DSM 11121 / KW20 / Rd) protein is Glycerate kinase (glxK).